The primary structure comprises 70 residues: Large ribosomal subunit protein bL31 (70 aa).

Cysteine 17, cysteine 19, cysteine 37, and cysteine 40 together coordinate Zn(2+).

Belongs to the bacterial ribosomal protein bL31 family. Type A subfamily. Part of the 50S ribosomal subunit. Zn(2+) serves as cofactor.

In terms of biological role, binds the 23S rRNA. The protein is Large ribosomal subunit protein bL31 of Clostridium kluyveri (strain NBRC 12016).